The primary structure comprises 220 residues: Glycerol-3-phosphate acyltransferase (220 aa).

5 consecutive transmembrane segments (helical) span residues 4–24 (LTILMIILAYLGGSLSSAVLV), 53–73 (VAALVVLLLDVLKGTAPVYLA), 80–100 (PVYLGFIGVAACLGHMYPIFF), 116–136 (MPIGFTMGGAVIGTWLVVLLV), and 138–158 (GYSSLASIITVLLSPLFTYLI). The disordered stretch occupies residues 193 to 220 (WGRQAQRRQEEVGEMDDVAQKRDERDKK). Positions 210 to 220 (VAQKRDERDKK) are enriched in basic and acidic residues.

The protein belongs to the PlsY family. Probably interacts with PlsX.

Its subcellular location is the cell inner membrane. The catalysed reaction is an acyl phosphate + sn-glycerol 3-phosphate = a 1-acyl-sn-glycero-3-phosphate + phosphate. The protein operates within lipid metabolism; phospholipid metabolism. Functionally, catalyzes the transfer of an acyl group from acyl-phosphate (acyl-PO(4)) to glycerol-3-phosphate (G3P) to form lysophosphatidic acid (LPA). This enzyme utilizes acyl-phosphate as fatty acyl donor, but not acyl-CoA or acyl-ACP. The chain is Glycerol-3-phosphate acyltransferase from Aeromonas salmonicida (strain A449).